The primary structure comprises 42 residues: Photosystem I reaction center subunit IX (42 aa).

A helical membrane pass occupies residues 7–27 (YLSTAPVLATLWFGFLAGLLI).

Belongs to the PsaJ family.

Its subcellular location is the plastid. It is found in the chloroplast thylakoid membrane. Its function is as follows. May help in the organization of the PsaE and PsaF subunits. This is Photosystem I reaction center subunit IX from Marchantia polymorpha (Common liverwort).